The following is a 245-amino-acid chain: Protein canopy homolog 4 (245 aa).

The N-terminal stretch at 1 to 27 (MCGLRFIMGPVRLEILLFILAAYGAWA) is a signal peptide. Intrachain disulfides connect C44–C202, C47–C190, and C100–C162. Residues 207–245 (WTGKEKISDGQEEADDEEEEEEEEITKTSGNPKHDPEDL) form a disordered region. Residues 209 to 237 (GKEKISDGQEEADDEEEEEEEEITKTSGN) adopt a coiled-coil conformation. The span at 216 to 230 (GQEEADDEEEEEEEE) shows a compositional bias: acidic residues.

It belongs to the canopy family. As to quaternary structure, interacts with TLR4. As to expression, highly expressed in lung, spleen, thymus, and uterus. Moderately expressed in kidney, stomach and placenta. Weakly expressed in brain, heart, liver, small intestine, skeletal muscle and testis.

Its subcellular location is the secreted. In terms of biological role, plays a role in the regulation of the cell surface expression of TLR4. The chain is Protein canopy homolog 4 (Cnpy4) from Mus musculus (Mouse).